A 461-amino-acid chain; its full sequence is Bifunctional protein GlmU (461 aa).

A pyrophosphorylase region spans residues 1–229; the sequence is MEKYVVVLAA…FSESLGVNDR (229 aa). Residues 8 to 11, K22, Q72, and 77 to 78 each bind UDP-N-acetyl-alpha-D-glucosamine; these read LAAG and GT. Residue D102 coordinates Mg(2+). UDP-N-acetyl-alpha-D-glucosamine contacts are provided by G139, E154, N169, and N227. N227 serves as a coordination point for Mg(2+). The linker stretch occupies residues 230–250; that stretch reads IALAEATRIMQRRINEGHMRD. Residues 251-461 form an N-acetyltransferase region; the sequence is GVTFIDPATA…LPLSEDEEWK (211 aa). UDP-N-acetyl-alpha-D-glucosamine contacts are provided by R332 and K350. Catalysis depends on H362, which acts as the Proton acceptor. Y365 and N376 together coordinate UDP-N-acetyl-alpha-D-glucosamine. Residues A422 and R439 each contribute to the acetyl-CoA site.

In the N-terminal section; belongs to the N-acetylglucosamine-1-phosphate uridyltransferase family. It in the C-terminal section; belongs to the transferase hexapeptide repeat family. Homotrimer. Mg(2+) serves as cofactor.

The protein resides in the cytoplasm. It catalyses the reaction alpha-D-glucosamine 1-phosphate + acetyl-CoA = N-acetyl-alpha-D-glucosamine 1-phosphate + CoA + H(+). The enzyme catalyses N-acetyl-alpha-D-glucosamine 1-phosphate + UTP + H(+) = UDP-N-acetyl-alpha-D-glucosamine + diphosphate. It functions in the pathway nucleotide-sugar biosynthesis; UDP-N-acetyl-alpha-D-glucosamine biosynthesis; N-acetyl-alpha-D-glucosamine 1-phosphate from alpha-D-glucosamine 6-phosphate (route II): step 2/2. It participates in nucleotide-sugar biosynthesis; UDP-N-acetyl-alpha-D-glucosamine biosynthesis; UDP-N-acetyl-alpha-D-glucosamine from N-acetyl-alpha-D-glucosamine 1-phosphate: step 1/1. The protein operates within bacterial outer membrane biogenesis; LPS lipid A biosynthesis. Its function is as follows. Catalyzes the last two sequential reactions in the de novo biosynthetic pathway for UDP-N-acetylglucosamine (UDP-GlcNAc). The C-terminal domain catalyzes the transfer of acetyl group from acetyl coenzyme A to glucosamine-1-phosphate (GlcN-1-P) to produce N-acetylglucosamine-1-phosphate (GlcNAc-1-P), which is converted into UDP-GlcNAc by the transfer of uridine 5-monophosphate (from uridine 5-triphosphate), a reaction catalyzed by the N-terminal domain. This chain is Bifunctional protein GlmU, found in Lactobacillus delbrueckii subsp. bulgaricus (strain ATCC 11842 / DSM 20081 / BCRC 10696 / JCM 1002 / NBRC 13953 / NCIMB 11778 / NCTC 12712 / WDCM 00102 / Lb 14).